The sequence spans 687 residues: C-mannosyltransferase dpy-19 (687 aa).

The next 11 helical transmembrane spans lie at 24–44, 170–190, 191–211, 223–243, 253–273, 276–296, 303–323, 324–344, 347–367, 415–435, and 454–474; these read GISG…VGFL, ITGV…LGVL, VSDS…NHGE, ESFA…IIKY, LLIS…FAFF, ICSI…AKTI, AFFI…ALYF, PSIW…GIRL, LYLL…KVGF, LSST…SWDF, and GEVI…VLIM.

Belongs to the dpy-19 family.

The protein localises to the endoplasmic reticulum membrane. Functionally, C-mannosyltransferase that mediates C-mannosylation of tryptophan residues on target proteins such as unc-5 and mig-21. Mediates the attachment of alpha-mannose in C-C linkage to the C2 of the indole ring of tryptophan. C-mannosylation takes place in the endoplasmic reticulum and frequently found in thrombospondin (TSP) type-1 repeats and in the WSXWS motif of type I cytokine receptors. Required to orient neuroblasts QL and QR correctly on the anterior/posterior (A/P) axis: QL and QR are born in the same A/P position, but polarize and migrate left/right asymmetrically, QL migrates toward the posterior and QR migrates toward the anterior. Required with unc-40 to express mab-5 correctly in the Q cell descendants. In Caenorhabditis briggsae, this protein is C-mannosyltransferase dpy-19.